The following is a 391-amino-acid chain: Formate-dependent phosphoribosylglycinamide formyltransferase (391 aa).

N(1)-(5-phospho-beta-D-ribosyl)glycinamide-binding positions include 20 to 21 and Glu80; that span reads EL. ATP contacts are provided by residues Arg112, Lys153, 158 to 163, 193 to 196, and Glu201; these read SSGKGQ and EGFI. The ATP-grasp domain occupies 117 to 306; it reads RLAAEELGLT…EFALHVRAFT (190 aa). The Mg(2+) site is built by Glu265 and Glu277. Residues Asp284, Lys354, and 361 to 362 each bind N(1)-(5-phospho-beta-D-ribosyl)glycinamide; that span reads RR.

This sequence belongs to the PurK/PurT family. Homodimer.

It catalyses the reaction N(1)-(5-phospho-beta-D-ribosyl)glycinamide + formate + ATP = N(2)-formyl-N(1)-(5-phospho-beta-D-ribosyl)glycinamide + ADP + phosphate + H(+). It functions in the pathway purine metabolism; IMP biosynthesis via de novo pathway; N(2)-formyl-N(1)-(5-phospho-D-ribosyl)glycinamide from N(1)-(5-phospho-D-ribosyl)glycinamide (formate route): step 1/1. Its function is as follows. Involved in the de novo purine biosynthesis. Catalyzes the transfer of formate to 5-phospho-ribosyl-glycinamide (GAR), producing 5-phospho-ribosyl-N-formylglycinamide (FGAR). Formate is provided by PurU via hydrolysis of 10-formyl-tetrahydrofolate. The polypeptide is Formate-dependent phosphoribosylglycinamide formyltransferase (Vibrio vulnificus (strain CMCP6)).